A 140-amino-acid polypeptide reads, in one-letter code: Early nodulin-like protein 22 (140 aa).

A signal peptide spans 1 to 28; sequence MAQSSGHVSYVAVTVPIAIVMTVLCLFL. The 100-residue stretch at 39 to 138 folds into the Phytocyanin domain; it reads TTYIVGGDDG…GLKMAIKALA (100 aa). A glycan (N-linked (GlcNAc...) asparagine) is linked at Asn-85. A disulfide bridge links Cys-92 with Cys-126.

The protein belongs to the early nodulin-like (ENODL) family.

May act as a carbohydrate transporter. The chain is Early nodulin-like protein 22 from Arabidopsis thaliana (Mouse-ear cress).